The chain runs to 604 residues: MSSMRIYVAIMKKPSVKHVDYVDKKASKPSWRVSSSATAGLRASSSLQLDVKKPADEILTARRSGNYQPSLWDFNYLQSLNTTHYKEERHLKREAELIEQVKMLLDEEMGAVQKLDLVDDLKNLGLSYFFEDQIKQILTFIYNEHECFRSNVEAKERDLYFTALGFRLLRQHGFQVSQEVFDCFKNEEGSDFKASLGDDTKGLVQLYEASFLLREGEDTLELARQYATKFLQKKVDHELIDDDSNLLSWIRHSLEIPLHWRIQRLEARWFLDAYATRHDVNPIILELAKLDFNIIQATQQEELKDLSRWWNSTCLVEKLPFVRDRLVESYFWAIALFEPHQYGYHRKIAAKIITLITSLDDVYDIYGTLDELQLFTDAIQRWDTESISRLAYYMQLFYMVLYNFVSELAYDGLKEKGFITIPYLQRSWADLVEAYLKEAKWFYNGYTPSMEEYLNNAYISIGATPVISQVFFTLATSIDKPVIESLYEYHRILRLSGMLVRLPDDLGTSPFEMKRGDVPKTIELYMKERNATEIEAQEHVRFLIREAWREMNTATAAADCPFTDDLVAAAANLGRAAQFMYLDGDGNHSQLHQRIASLLFEPYA.

The transit peptide at 1-36 (MSSMRIYVAIMKKPSVKHVDYVDKKASKPSWRVSSS) directs the protein to the chloroplast. The (2E)-geranyl diphosphate site is built by R323, D360, D364, R501, and D504. Residues D360 and D364 each coordinate Mg(2+). A DDXXD motif motif is present at residues 360 to 364 (DDVYD). Mg(2+)-binding residues include D504, T508, and E512.

This sequence belongs to the terpene synthase family. Tpsb subfamily. As to quaternary structure, monomer. Mg(2+) serves as cofactor. Requires Mn(2+) as cofactor.

The protein localises to the plastid. It localises to the chloroplast. It carries out the reaction (2E)-geranyl diphosphate + H2O = linalool + diphosphate. Its pathway is secondary metabolite biosynthesis; terpenoid biosynthesis. Functionally, monoterpene synthase (mono-TPS) involved in the biosynthesis of monoterpenes natural products. Catalyzes the conversion of (2E)-geranyl diphosphate (GPP) into linalool. The sequence is that of Linalool synthase Tps-5073L4, chloroplastic from Perilla frutescens (Beefsteak mint).